The primary structure comprises 375 residues: All-trans-retinol dehydrogenase [NAD(+)] ADH1B (375 aa).

Residue serine 2 is modified to N-acetylserine. Serine 23 carries the phosphoserine modification. Position 35 is a phosphotyrosine (tyrosine 35). Zn(2+) is bound by residues cysteine 47, histidine 68, cysteine 98, cysteine 101, cysteine 104, cysteine 112, and cysteine 175. NAD(+)-binding positions include 200–205, aspartate 224, lysine 229, 293–295, and arginine 370; these read GLGGVG and VGV.

Belongs to the zinc-containing alcohol dehydrogenase family. In terms of assembly, homodimer or heterodimer of closely related subunits. The cofactor is Zn(2+).

It is found in the cytoplasm. The enzyme catalyses all-trans-retinol + NAD(+) = all-trans-retinal + NADH + H(+). It carries out the reaction all-trans-4-hydroxyretinol + NAD(+) = all-trans-4-hydroxyretinal + NADH + H(+). The catalysed reaction is all-trans-4-oxoretinol + NAD(+) = all-trans-4-oxoretinal + NADH + H(+). Catalyzes the NAD-dependent oxidation of all-trans-retinol and its derivatives such as all-trans-4-hydroxyretinol and may participate in retinoid metabolism. In vitro can also catalyze the NADH-dependent reduction of all-trans-retinal and its derivatives such as all-trans-4-oxoretinal. Catalyzes in the oxidative direction with higher efficiency. Has the same affinity for all-trans-4-hydroxyretinol and all-trans-4-oxoretinal. The chain is All-trans-retinol dehydrogenase [NAD(+)] ADH1B from Pan troglodytes (Chimpanzee).